The sequence spans 355 residues: uncharacterized protein (355 aa).

58–65 lines the ATP pocket; it reads GYIIFGIK.

This is an uncharacterized protein from Ureaplasma parvum serovar 3 (strain ATCC 700970).